The chain runs to 199 residues: MILFYVFVVLALVSGAMVIRAKNPVHSVLFLILVFCNTSGLLVLLGLDFFAMIFLVVYVGAIAVLFLFVVMMLHIRIEEIHENVLRYLPVGGIIGLIFLLEIFLMVDNDYIPILPTKLSATYLTYTVYAGKIHSWTNLETLGNLLYTTYFFLFLVSSLILLVALIGAIVLTMHKTTKVKRQDVFIQNAIDFQNTIKKVR.

5 helical membrane passes run 1 to 21 (MILF…VIRA), 27 to 47 (SVLF…LLGL), 49 to 69 (FFAM…FLFV), 87 to 107 (YLPV…LMVD), and 150 to 170 (FFLF…AIVL).

Belongs to the complex I subunit 6 family.

Its subcellular location is the mitochondrion membrane. The enzyme catalyses a ubiquinone + NADH + 5 H(+)(in) = a ubiquinol + NAD(+) + 4 H(+)(out). In terms of biological role, core subunit of the mitochondrial membrane respiratory chain NADH dehydrogenase (Complex I) that is believed to belong to the minimal assembly required for catalysis. Complex I functions in the transfer of electrons from NADH to the respiratory chain. The immediate electron acceptor for the enzyme is believed to be ubiquinone. The polypeptide is NADH-ubiquinone oxidoreductase chain 6 (ND6) (Marchantia polymorpha (Common liverwort)).